Reading from the N-terminus, the 537-residue chain is 5,6-dihydroxyindole-2-carboxylic acid oxidase (537 aa).

A signal peptide spans 1–24; it reads MKSYNVLPLAYISLFLMLFYQVWA. Topologically, residues 25 to 477 are lumenal, melanosome; the sequence is QFPRECANIE…WPGQEFTVSE (453 aa). 5 cysteine pairs are disulfide-bonded: Cys30/Cys41, Cys42/Cys65, Cys56/Cys99, Cys101/Cys110, and Cys113/Cys122. Residues Asn96 and Asn104 are each glycosylated (N-linked (GlcNAc...) asparagine). A glycan (N-linked (GlcNAc...) asparagine) is linked at Asn181. Residues His192, His215, and His224 each contribute to the Zn(2+) site. Intrachain disulfides connect Cys258–Cys261 and Cys290–Cys303. Asn304 and Asn350 each carry an N-linked (GlcNAc...) asparagine glycan. Residues His377 and His381 each contribute to the Zn(2+) site. N-linked (GlcNAc...) asparagine glycosylation is present at Asn385. His404 contributes to the Zn(2+) binding site. The chain crosses the membrane as a helical span at residues 478 to 501; that stretch reads IITIAVVAALLLVAAIFGVASCLI. Topologically, residues 502–537 are cytoplasmic; it reads RSRSTKNEANQPLLTDHYQRYAEDYEELPNPNHSMV.

The protein belongs to the tyrosinase family. In terms of assembly, monomer. Interacts with ATP7A. Interacts with SLC45A2. Cu(2+) is required as a cofactor. It depends on Zn(2+) as a cofactor. In terms of processing, glycosylated. In terms of tissue distribution, pigment cells.

The protein resides in the melanosome membrane. It carries out the reaction 2 5,6-dihydroxyindole-2-carboxylate + O2 = 2 indole-5,6-quinone-2-carboxylate + 2 H2O. Its pathway is pigment biosynthesis; melanin biosynthesis. Functionally, plays a role in melanin biosynthesis. Catalyzes the oxidation of 5,6-dihydroxyindole-2-carboxylic acid (DHICA) into indole-5,6-quinone-2-carboxylic acid. May regulate or influence the type of melanin synthesized. Also to a lower extent, capable of hydroxylating tyrosine and producing melanin. This is 5,6-dihydroxyindole-2-carboxylic acid oxidase (Tyrp1) from Mus musculus (Mouse).